A 664-amino-acid chain; its full sequence is MERVDHLADERNKAEFNVDDMKIVWAGSRHAFDVSNRMSRLVANDPVFEKSKRAVMSRKELFKNTLRKSVHAWKLINELRLSDEEGLKLRSFMDQPGFLDLHWGMFVPAIKGQGTEQQQQKWLSLATKMQIIGCYAQTELGHGSNVQGLETTATFDPKTDQFIIHSPTQTSSKWWPGGLGKVSTHAVIYARLITNGKDHGVHGFIVQLRSLDDHSPLPGITVGDIGMKFGNGAYNSMDNGFLMFDHFRIPRDQMLMRLSKVTREGKYVASDVPRQLVYGTMVYVRQSIVSNASTALARAVCIATRYSAVRRQFGSHDGGIETQVINYKTQQNRLFPLLASAYAFRFVGEWLKWLYTDVTKRLEASDFATLPEAHACTAGLKSMTTSATSDGIEECRKLCGGHGYLWCSGLPELFAVYVPACTYEGDNVVLQLQVARFLMKTVSQLGSGKAPSGTTAYMGRAKHLLQCSSGVRNARDWLNPGMVLEAFEARALRMAVTCANNLSKFENQEQGFSELLADLVEAATAHCQLIVVSKFIAKVEGDIEGKGVKKQLKNLCYIYALYLLHKHLGDFLSTNSVTPEQASLANQQLRSLYSQVRPNAVALVDAFDYTDQYLGSVLGRYDGNVYPKLFEEALKDPLNDSVVPDGYREYIRPLIKQRFRSAKL.

399–404 lines the FAD pocket; the sequence is CGGHGY. The Microbody targeting signal signature appears at 662 to 664; it reads AKL.

This sequence belongs to the acyl-CoA oxidase family. The cofactor is FAD.

It localises to the peroxisome. It carries out the reaction a 2,3-saturated acyl-CoA + O2 = a (2E)-enoyl-CoA + H2O2. Its function is as follows. Catalyzes the desaturation of acyl-CoAs to 2-trans-enoyl-CoAs. This is Putative peroxisomal acyl-coenzyme A oxidase 1.2 (ACX1.2) from Arabidopsis thaliana (Mouse-ear cress).